Here is a 452-residue protein sequence, read N- to C-terminus: Transcription factor SMP1 (452 aa).

In terms of domain architecture, MADS-box spans 3-57; that stretch reads RRKIEIEPIKDDRNRTVTFIKRKAGLFKKAHELSVLCQVDIAVIILGSNNTFYEY. The mef2-type DNA-binding region spans 58 to 87; it reads SSVDMSNLLNVHQNNTDLPHNIIEPSDYGD. Residues 97–142 are disordered; the sequence is NERKRRRRRATVLQPASHSGSCTVSSQDSSSVQNNGNLSAPLASND. A compositionally biased stretch (low complexity) spans 115–127; it reads SGSCTVSSQDSSS.

It belongs to the MEF2 family. Can heterodimerize with RLM1. Interacts with HOG1. In terms of processing, phosphorylated by HOG1.

The protein localises to the nucleus. Its function is as follows. Transcription factor that controls part of the HOG1-mediated osmostress responses. Binds to the DNA sequence 5'-ACTACTA[TA](4)TAG-3'. Does not appear to function in the MPK1 pathway. In Saccharomyces cerevisiae (strain ATCC 204508 / S288c) (Baker's yeast), this protein is Transcription factor SMP1 (SMP1).